The following is a 726-amino-acid chain: Catalase-peroxidase (726 aa).

Residues 1-25 (MDAKTDDSAGKCPFTGGGRRGHRNR) form a disordered region. Positions 96 to 218 (WHSAGTYRIT…LAAVQMGLIY (123 aa)) form a cross-link, tryptophyl-tyrosyl-methioninium (Trp-Tyr) (with M-244). Residue histidine 97 is the Proton acceptor of the active site. The tryptophyl-tyrosyl-methioninium (Tyr-Met) (with W-96) cross-link spans 218–244 (YVNPEGPNGNPDPVAAAKDIRETFYRM). Residue histidine 259 participates in heme b binding.

Belongs to the peroxidase family. Peroxidase/catalase subfamily. In terms of assembly, homodimer or homotetramer. Requires heme b as cofactor. Formation of the three residue Trp-Tyr-Met cross-link is important for the catalase, but not the peroxidase activity of the enzyme.

The catalysed reaction is H2O2 + AH2 = A + 2 H2O. It carries out the reaction 2 H2O2 = O2 + 2 H2O. Its function is as follows. Bifunctional enzyme with both catalase and broad-spectrum peroxidase activity. In Chelativorans sp. (strain BNC1), this protein is Catalase-peroxidase.